Consider the following 305-residue polypeptide: Glycine--tRNA ligase alpha subunit (305 aa).

The protein belongs to the class-II aminoacyl-tRNA synthetase family. Tetramer of two alpha and two beta subunits.

The protein resides in the cytoplasm. The catalysed reaction is tRNA(Gly) + glycine + ATP = glycyl-tRNA(Gly) + AMP + diphosphate. The chain is Glycine--tRNA ligase alpha subunit from Streptococcus pneumoniae (strain Hungary19A-6).